Here is a 407-residue protein sequence, read N- to C-terminus: ATP-citrate synthase subunit alpha chain protein 1 (407 aa).

Residues asparagine 327, threonine 329, and arginine 360 each contribute to the citrate site.

It belongs to the succinate/malate CoA ligase beta subunit family. Heterooctamer of 4 alpha and 4 beta chains.

It localises to the cytoplasm. Its subcellular location is the cytosol. The enzyme catalyses oxaloacetate + acetyl-CoA + ADP + phosphate = citrate + ATP + CoA. Its function is as follows. ATP citrate-lyase is the primary enzyme responsible for the synthesis of cytosolic acetyl-CoA, used for the elongation of fatty acids and biosynthesis of isoprenoids, flavonoids and malonated derivatives. May supply substrate to the cytosolic acetyl-CoA carboxylase, which generates the malonyl-CoA used for the synthesis of a multitude of compounds, including very long chain fatty acids and flavonoids. In contrast to all known animal ACL enzymes having a homomeric structure, plant ACLs are composed of alpha and beta chains. The protein is ATP-citrate synthase subunit alpha chain protein 1 (ACLA-1) of Oryza sativa subsp. japonica (Rice).